A 138-amino-acid polypeptide reads, in one-letter code: Putative pre-16S rRNA nuclease (138 aa).

This sequence belongs to the YqgF nuclease family.

Its subcellular location is the cytoplasm. In terms of biological role, could be a nuclease involved in processing of the 5'-end of pre-16S rRNA. This is Putative pre-16S rRNA nuclease from Listeria monocytogenes serotype 4b (strain CLIP80459).